We begin with the raw amino-acid sequence, 568 residues long: Kelch-like protein 12 (568 aa).

Residues Cys33–Val100 form the BTB domain. In terms of domain architecture, BACK spans Cys135–Ile236. Kelch repeat units follow at residues Val282–Asp329, Ile331–Asp379, Met380–Gly426, Ile427–Asp473, Ile475–Gly520, and Leu522–Glu567. Residues Gln405–Lys568 are interaction with DVL3.

In terms of assembly, component of the BCR(KLHL12) E3 ubiquitin ligase complex, at least composed of CUL3 and KLHL12 and RBX1. This complex interacts with DVL3 upon activation of the Wnt signaling pathway by WNT3A. Interacts with DRD4, KLHL2 and SEC31A. Interacts with PEF1 and PDCD6/ALG-2; interaction takes place in response to cytosolic calcium increase and leads to bridge together the BCR(KLHL12) complex and SEC31 (SEC31A or SEC31B). In terms of processing, ubiquitinated by the SCF(FBXL17) complex, leading to its degradation by the proteasome: ubiquitination by the SCF(FBXL17) complex takes place when aberrant BTB domain dimers are formed.

It is found in the cytoplasmic vesicle. The protein resides in the COPII-coated vesicle. It participates in protein modification; protein ubiquitination. Functionally, substrate-specific adapter of a BCR (BTB-CUL3-RBX1) E3 ubiquitin ligase complex that acts as a negative regulator of Wnt signaling pathway and ER-Golgi transport. The BCR(KLHL12) complex is involved in ER-Golgi transport by regulating the size of COPII coats, thereby playing a key role in collagen export, which is required for embryonic stem (ES) cells division: BCR(KLHL12) acts by mediating monoubiquitination of SEC31 (SEC31A or SEC31B). The BCR(KLHL12) complex is also involved in neural crest specification: in response to cytosolic calcium increase, interacts with the heterodimer formed with PEF1 and PDCD6/ALG-2, leading to bridge together the BCR(KLHL12) complex and SEC31 (SEC31A or SEC31B), promoting monoubiquitination of SEC31 and subsequent collagen export. As part of the BCR(KLHL12) complex, also acts as a negative regulator of the Wnt signaling pathway by mediating ubiquitination and subsequent proteolysis of DVL3. The BCR(KLHL12) complex also mediates polyubiquitination of DRD4 and PEF1, without leading to degradation of these proteins. In Rattus norvegicus (Rat), this protein is Kelch-like protein 12 (Klhl12).